The chain runs to 370 residues: Chloromuconate cycloisomerase (370 aa).

Lysine 165 serves as the catalytic Proton acceptor. Positions 194, 220, and 245 each coordinate Mn(2+). Residue glutamate 323 is the Proton donor of the active site.

It belongs to the mandelate racemase/muconate lactonizing enzyme family. Mn(2+) is required as a cofactor.

The catalysed reaction is 2-[(2R)-2-chloro-2,5-dihydro-5-oxofuryl]acetate = 3-chloro-cis,cis-muconate + H(+). The protein operates within aromatic compound metabolism; 3-chlorocatechol degradation. This chain is Chloromuconate cycloisomerase (tfdD), found in Delftia acidovorans (Pseudomonas acidovorans).